The sequence spans 378 residues: Ribosomal RNA large subunit methyltransferase G (378 aa).

It belongs to the methyltransferase superfamily. RlmG family.

The protein resides in the cytoplasm. It carries out the reaction guanosine(1835) in 23S rRNA + S-adenosyl-L-methionine = N(2)-methylguanosine(1835) in 23S rRNA + S-adenosyl-L-homocysteine + H(+). Its function is as follows. Specifically methylates the guanine in position 1835 (m2G1835) of 23S rRNA. The sequence is that of Ribosomal RNA large subunit methyltransferase G from Salmonella newport (strain SL254).